Reading from the N-terminus, the 254-residue chain is Arginine transport ATP-binding protein ArgV (254 aa).

In terms of domain architecture, ABC transporter spans 6–250 (IDAQQVCKNY…PKEQRTKDFL (245 aa)). An ATP-binding site is contributed by 38–45 (GPSGSGKS).

The protein belongs to the ABC transporter superfamily. As to quaternary structure, the complex is probably composed of two ATP-binding proteins (ArgV), two transmembrane proteins (ArgU) and a solute-binding protein (ArgT).

The protein resides in the cell membrane. The catalysed reaction is a polar amino acid(out) + ATP + H2O = a polar amino acid(in) + ADP + phosphate + H(+). It carries out the reaction L-arginine(out) + ATP + H2O = L-arginine(in) + ADP + phosphate + H(+). Its function is as follows. Part of the ABC transporter complex ArgTUV involved in L-arginine import. May also transport L-citrulline. Probably responsible for energy coupling to the transport system. This Corynebacterium glutamicum (strain ATCC 13032 / DSM 20300 / JCM 1318 / BCRC 11384 / CCUG 27702 / LMG 3730 / NBRC 12168 / NCIMB 10025 / NRRL B-2784 / 534) protein is Arginine transport ATP-binding protein ArgV.